The chain runs to 95 residues: Putative membrane protein insertion efficiency factor (95 aa).

It belongs to the UPF0161 family.

The protein localises to the cell membrane. In terms of biological role, could be involved in insertion of integral membrane proteins into the membrane. The sequence is that of Putative membrane protein insertion efficiency factor from Lactobacillus delbrueckii subsp. bulgaricus (strain ATCC 11842 / DSM 20081 / BCRC 10696 / JCM 1002 / NBRC 13953 / NCIMB 11778 / NCTC 12712 / WDCM 00102 / Lb 14).